The sequence spans 320 residues: Putative cyclin-D7-1 (320 aa).

A disordered region spans residues 1 to 46 (MDDDDDTSFNNSLDLYCDEDPFDSTPPPPPPPPEQQQQAGTTTPDD). The span at 24-34 (STPPPPPPPPE) shows a compositional bias: pro residues. The segment covering 35-44 (QQQQAGTTTP) has biased composition (low complexity).

This sequence belongs to the cyclin family. Cyclin D subfamily.

In Oryza sativa subsp. japonica (Rice), this protein is Putative cyclin-D7-1 (CYCD7-1).